The following is a 71-amino-acid chain: Protein SlyX homolog (71 aa).

Belongs to the SlyX family.

The polypeptide is Protein SlyX homolog (Rhodopseudomonas palustris (strain BisB5)).